A 291-amino-acid polypeptide reads, in one-letter code: Putative butyrophilin-like protein 10 pseudogene (291 aa).

An N-terminal signal peptide occupies residues 1–26; the sequence is MAVTCDPEAFLSICFVTLVFLQLPLA. Positions 27–146 constitute an Ig-like V-type domain; that stretch reads SIWKADFDVT…GEATVQVQVA (120 aa). Topologically, residues 27 to 254 are extracellular; that stretch reads SIWKADFDVT…RSSQFTAWKA (228 aa). A disulfide bond links Cys-54 and Cys-128. The N-linked (GlcNAc...) asparagine glycan is linked to Asn-59. Residues 255 to 275 form a helical membrane-spanning segment; the sequence is ALPLILVAMGLVIAGGICIFW. Residues 276-291 are Cytoplasmic-facing; that stretch reads KRQREKNKASLEEERE.

Belongs to the immunoglobulin superfamily. BTN/MOG family.

Its subcellular location is the membrane. The chain is Putative butyrophilin-like protein 10 pseudogene from Homo sapiens (Human).